The following is a 381-amino-acid chain: Erythronate-4-phosphate dehydrogenase (381 aa).

Substrate is bound by residues serine 45 and threonine 67. Residues 127–128, aspartate 147, and threonine 176 each bind NAD(+); that span reads QV. Arginine 209 is a catalytic residue. Position 233 (aspartate 233) interacts with NAD(+). Glutamate 238 is a catalytic residue. Histidine 255 acts as the Proton donor in catalysis. Glycine 258 is an NAD(+) binding site. Tyrosine 259 serves as a coordination point for substrate.

It belongs to the D-isomer specific 2-hydroxyacid dehydrogenase family. PdxB subfamily. As to quaternary structure, homodimer.

The protein resides in the cytoplasm. It catalyses the reaction 4-phospho-D-erythronate + NAD(+) = (R)-3-hydroxy-2-oxo-4-phosphooxybutanoate + NADH + H(+). It functions in the pathway cofactor biosynthesis; pyridoxine 5'-phosphate biosynthesis; pyridoxine 5'-phosphate from D-erythrose 4-phosphate: step 2/5. Its function is as follows. Catalyzes the oxidation of erythronate-4-phosphate to 3-hydroxy-2-oxo-4-phosphonooxybutanoate. The chain is Erythronate-4-phosphate dehydrogenase from Vibrio cholerae serotype O1 (strain ATCC 39315 / El Tor Inaba N16961).